Reading from the N-terminus, the 223-residue chain is Ras-related protein Rab-21 (223 aa).

The residue at position 2 (A2) is an N-acetylalanine. G26, G29, K30, T31, S32, N43, D44, H46, T48, and T49 together coordinate GTP. Residue T31 coordinates Mg(2+). Residues 41–54 (KFNDKHITTLQASF) carry the Switch 1 motif. Residues T49 and D72 each coordinate Mg(2+). Residues 74–92 (AGQERFHALGPIYYRDSNG) carry the Switch 2 motif. Residues G75, N130, K131, D133, A161, and K162 each coordinate GTP. S-geranylgeranyl cysteine attachment occurs at residues C219 and C220. Cysteine methyl ester is present on C220. Residues 221–223 (SSG) constitute a propeptide, removed in mature form.

The protein belongs to the small GTPase superfamily. Rab family. As to quaternary structure, interacts with the cytoplasmic tail of integrins ITGA1, ITGA2, ITGA5, ITGA6, ITGA11 and ITGB1; this interaction is dependent upon its GDP/GTP cycle. Interacts with ANKRD27. Interacts (active GTP-bound form) with TMED10; the interaction is indirect and regulates TMED10 abundance and localization at the Golgi. It depends on Mg(2+) as a cofactor.

The protein localises to the endoplasmic reticulum membrane. The protein resides in the golgi apparatus. It localises to the trans-Golgi network. Its subcellular location is the golgi apparatus membrane. It is found in the early endosome membrane. The protein localises to the cytoplasmic vesicle membrane. The protein resides in the cleavage furrow. It localises to the cell projection. Its subcellular location is the neuron projection. The catalysed reaction is GTP + H2O = GDP + phosphate + H(+). Regulated by guanine nucleotide exchange factors (GEFs) including ANKRD27 and RABGEF1, which promote the exchange of bound GDP for free GTP. Regulated by GTPase activating proteins (GAPs) which increase the GTP hydrolysis activity. Inhibited by GDP dissociation inhibitors (GDIs). Its function is as follows. The small GTPases Rab are key regulators of intracellular membrane trafficking, from the formation of transport vesicles to their fusion with membranes. Rabs cycle between an inactive GDP-bound form and an active GTP-bound form that is able to recruit to membranes different sets of downstream effectors directly responsible for vesicle formation, movement, tethering and fusion. RAB21 is involved in membrane trafficking control. Regulates integrin internalization and recycling, but does not influence the traffic of endosomally translocated receptors in general. As a result, may regulate cell adhesion and migration. During the mitosis of adherent cells, controls the endosomal trafficking of integrins which is required for the successful completion of cytokinesis. Involved in neurite growth. Modulates protein levels of the cargo receptors TMED2 and TMED10, and required for appropriate Golgi localization of TMED10. This is Ras-related protein Rab-21 (RAB21) from Canis lupus familiaris (Dog).